The sequence spans 202 residues: Thymidylate kinase (202 aa).

Position 7–14 (G7–T14) interacts with ATP.

This sequence belongs to the thymidylate kinase family.

The catalysed reaction is dTMP + ATP = dTDP + ADP. Its function is as follows. Phosphorylation of dTMP to form dTDP in both de novo and salvage pathways of dTTP synthesis. This is Thymidylate kinase from Ehrlichia ruminantium (strain Gardel).